We begin with the raw amino-acid sequence, 458 residues long: Bifunctional protein GlmU (458 aa).

A pyrophosphorylase region spans residues 1–224 (MTVIALAAGK…PKVAVGVNNQ (224 aa)). UDP-N-acetyl-alpha-D-glucosamine-binding positions include 6-9 (LAAG), Lys-20, Gln-71, and 76-77 (GT). Asp-99 lines the Mg(2+) pocket. Residues Gly-136, Glu-150, Asn-165, and Asn-222 each contribute to the UDP-N-acetyl-alpha-D-glucosamine site. Asn-222 is a Mg(2+) binding site. A linker region spans residues 225–245 (LELARATRLLFKRKALRLMED). The N-acetyltransferase stretch occupies residues 246–458 (GVLMIDPRTV…TAETEEKEQV (213 aa)). 2 residues coordinate UDP-N-acetyl-alpha-D-glucosamine: Arg-328 and Lys-346. The Proton acceptor role is filled by His-358. UDP-N-acetyl-alpha-D-glucosamine-binding residues include Tyr-361 and Asn-372. Acetyl-CoA-binding positions include 381–382 (NY), Ser-401, Ser-419, and Arg-436.

In the N-terminal section; belongs to the N-acetylglucosamine-1-phosphate uridyltransferase family. This sequence in the C-terminal section; belongs to the transferase hexapeptide repeat family. In terms of assembly, homotrimer. It depends on Mg(2+) as a cofactor.

It localises to the cytoplasm. It catalyses the reaction alpha-D-glucosamine 1-phosphate + acetyl-CoA = N-acetyl-alpha-D-glucosamine 1-phosphate + CoA + H(+). The enzyme catalyses N-acetyl-alpha-D-glucosamine 1-phosphate + UTP + H(+) = UDP-N-acetyl-alpha-D-glucosamine + diphosphate. It participates in nucleotide-sugar biosynthesis; UDP-N-acetyl-alpha-D-glucosamine biosynthesis; N-acetyl-alpha-D-glucosamine 1-phosphate from alpha-D-glucosamine 6-phosphate (route II): step 2/2. Its pathway is nucleotide-sugar biosynthesis; UDP-N-acetyl-alpha-D-glucosamine biosynthesis; UDP-N-acetyl-alpha-D-glucosamine from N-acetyl-alpha-D-glucosamine 1-phosphate: step 1/1. The protein operates within bacterial outer membrane biogenesis; LPS lipid A biosynthesis. Catalyzes the last two sequential reactions in the de novo biosynthetic pathway for UDP-N-acetylglucosamine (UDP-GlcNAc). The C-terminal domain catalyzes the transfer of acetyl group from acetyl coenzyme A to glucosamine-1-phosphate (GlcN-1-P) to produce N-acetylglucosamine-1-phosphate (GlcNAc-1-P), which is converted into UDP-GlcNAc by the transfer of uridine 5-monophosphate (from uridine 5-triphosphate), a reaction catalyzed by the N-terminal domain. The protein is Bifunctional protein GlmU of Bdellovibrio bacteriovorus (strain ATCC 15356 / DSM 50701 / NCIMB 9529 / HD100).